The following is a 92-amino-acid chain: Acylphosphatase (92 aa).

One can recognise an Acylphosphatase-like domain in the interval 5 to 92; the sequence is RAHVVVSGKV…GEFSGFKIAF (88 aa). Catalysis depends on residues R20 and N38.

The protein belongs to the acylphosphatase family.

It carries out the reaction an acyl phosphate + H2O = a carboxylate + phosphate + H(+). The polypeptide is Acylphosphatase (acyP) (Pelotomaculum thermopropionicum (strain DSM 13744 / JCM 10971 / SI)).